The sequence spans 603 residues: Elongation factor 4 (603 aa).

One can recognise a tr-type G domain in the interval 2 to 184 (NHIRNFSIIA…AVIARVPPPK (183 aa)). GTP contacts are provided by residues 14–19 (DHGKST) and 131–134 (NKMD).

It belongs to the TRAFAC class translation factor GTPase superfamily. Classic translation factor GTPase family. LepA subfamily.

The protein resides in the cell inner membrane. The catalysed reaction is GTP + H2O = GDP + phosphate + H(+). Functionally, required for accurate and efficient protein synthesis under certain stress conditions. May act as a fidelity factor of the translation reaction, by catalyzing a one-codon backward translocation of tRNAs on improperly translocated ribosomes. Back-translocation proceeds from a post-translocation (POST) complex to a pre-translocation (PRE) complex, thus giving elongation factor G a second chance to translocate the tRNAs correctly. Binds to ribosomes in a GTP-dependent manner. This is Elongation factor 4 from Polaromonas sp. (strain JS666 / ATCC BAA-500).